We begin with the raw amino-acid sequence, 141 residues long: Large ribosomal subunit protein uL11 (141 aa).

This sequence belongs to the universal ribosomal protein uL11 family. As to quaternary structure, part of the ribosomal stalk of the 50S ribosomal subunit. Interacts with L10 and the large rRNA to form the base of the stalk. L10 forms an elongated spine to which L12 dimers bind in a sequential fashion forming a multimeric L10(L12)X complex. Post-translationally, one or more lysine residues are methylated.

Functionally, forms part of the ribosomal stalk which helps the ribosome interact with GTP-bound translation factors. The polypeptide is Large ribosomal subunit protein uL11 (Synechococcus elongatus (strain ATCC 33912 / PCC 7942 / FACHB-805) (Anacystis nidulans R2)).